We begin with the raw amino-acid sequence, 504 residues long: MEYSPLSIVITFFVFLLLHWLVKTYKQKSSHKLPPGPWRLPIIGNLHQLALAASLPDQALQKLVRKYGPLMHLQLGEISTLVVSSPKMAMEMMKTHDVHFVQRPQLLAPQFMVYGATDIAFAPYGDYWRQIRKICTLELLSAKRVQSFSHIRQDENKKLIQSIHSSAGSPIDLSGKLFSLLGTTVSRAAFGKENDDQDEFMSLVRKAITMTGGFEVDDMFPSLKPLHLLTRQKAKVEHVHQRADKILEDILRKHMEKRTRVKEGNGSEAEQEDLVDVLLRLKESGSLEVPMTMENIKAVIWNIFAAGTDTSASTLEWAMSEMMKNPKVKEKAQAELRQIFKGKEIIRETDLEELSYLKSVIKETLRLHPPSQLIPRECIISTNIDGYEIPIKTKVMINTWAIGRDPQYWSDADRFIPERFNDSSIDFKGNSFEYIPFGAGRRMCPGMTFGLASITLPLALLLYHFNWELPNKMKPEDLDMDEHFGMTVARKNKLFLIPTVYEAS.

Cys-444 is a heme binding site.

It belongs to the cytochrome P450 family. Heme is required as a cofactor.

This chain is Cytochrome P450 71D8 (CYP71D8), found in Glycine max (Soybean).